Here is a 1976-residue protein sequence, read N- to C-terminus: DNA-directed RNA polymerase V subunit 1 (1976 aa).

Zn(2+) is bound by residues Cys-57, Cys-60, Cys-68, His-71, Cys-98, and Cys-101. Mg(2+) is bound by residues Asp-449, Asp-451, and Asp-453. The bridging helix stretch occupies residues 751–763; the sequence is PYEEMAHSIAARE. Copy 1 of the repeat occupies 1215-1216; it reads WG. Residues 1215–1693 are 18 X 2 AA repeats of [WG]-[GW] repeats; that stretch reads WGKRVDVGTG…AKKFPSSGGW (479 aa). Disordered regions lie at residues 1272 to 1291, 1298 to 1718, and 1847 to 1976; these read EEEMAEWAESPERDSALGEP, DFQN…EDNL, and FTKP…QTQT. Composition is skewed to basic and acidic residues over residues 1281 to 1291 and 1298 to 1307; these read SPERDSALGEP and DFQNLHDEGK. The stretch at 1329 to 1330 is repeat 2; it reads WG. A compositionally biased stretch (polar residues) spans 1332-1348; the sequence is SKSTGGEANPESNWEKT. The span at 1349-1371 shows a compositional bias: basic and acidic residues; that stretch reads TNVEKEDAWSSWNTRKDAQESSK. A run of 15 repeats spans residues 1378–1379, 1415–1416, 1430–1431, 1439–1440, 1447–1448, 1464–1465, 1498–1499, 1528–1529, 1545–1546, 1562–1563, 1596–1597, 1604–1605, 1621–1622, 1638–1639, and 1641–1642. The segment covering 1415–1430 has biased composition (basic and acidic residues); the sequence is WGHKSVSDKSWDKKNW. A compositionally biased stretch (polar residues) spans 1491–1501; that stretch reads TESNGATWGSS. Residues 1648–1678 show a composition bias toward basic and acidic residues; the sequence is AEDKDTNEDDRNPWVSLKETKSREKDDKERS. A run of 2 repeats spans residues 1680–1681 and 1692–1693. A compositionally biased stretch (polar residues) spans 1869–1878; that stretch reads EQSQPPNQSI. The span at 1886–1976 shows a compositional bias: low complexity; it reads QTQTQSQSPS…SSQSPSQTQT (91 aa).

The protein belongs to the RNA polymerase beta' chain family. In terms of assembly, component of the RNA polymerase V complex. Interacts with NRPD4, NRPD2A, and (via C-terminus) with AGO4. Interacts with SUVH2. In terms of tissue distribution, mostly expressed in flowers, and, to a lower extent, in leaves. Present in sperm cells.

It localises to the nucleus. Its subcellular location is the nucleolus. It catalyses the reaction RNA(n) + a ribonucleoside 5'-triphosphate = RNA(n+1) + diphosphate. DNA-dependent RNA polymerase catalyzes the transcription of DNA into RNA using the four ribonucleoside triphosphates as substrates. Largest and catalytic component of RNA polymerase V involved in RNA-directed DNA methylation-dependent (RdDM) silencing of endogenous repeated sequences, including transposable elements. Also required for full erasure of methylation when the RNA trigger is withdrawn. Seems also involved in the synthesis of short-interfering RNAs (siRNA). Essential component of a self-reinforcing loop coupling de novo DNA methylation to siRNA production. Involved in the maintenance of post-transcriptional RNA silencing. This is DNA-directed RNA polymerase V subunit 1 (NRPE1) from Arabidopsis thaliana (Mouse-ear cress).